The chain runs to 65 residues: Vespid chemotactic peptide 5h (65 aa).

The N-terminal stretch at 1-23 (MKYNIVFLFAIIASLACLQLTFA) is a signal peptide. AXPX repeat units lie at residues 23-26 (AAPA), 27-30 (ASPL), 31-34 (ANPG), 35-38 (ASPD), 39-42 (AAPN), 43-46 (ADPL), and 47-50 (ADPF). The propeptide occupies 24 to 49 (APAASPLANPGASPDAAPNADPLADP). The residue at position 62 (Leu62) is a Leucine amide.

Belongs to the MCD family. Crabrolin subfamily. As to expression, expressed by the venom gland.

Its subcellular location is the secreted. Shows antimicrobial activity against the Gram-negative bacteria E.coli ATCC 25922 (MIC=30 ug/ml), the Gram-positive bacteria S.aureus ATCC 2592 (MIC=5 ug/ml) and the fungus C.albicans ATCC 2002 (MIC=25 ug/ml). Acts as a mast cell degranulating peptide. Its mast cell degranulation activity may be related to the activation of G-protein coupled receptors in mast cells as well as interaction with other proteins located in cell endosomal membranes in the mast cells. Induces the chemotaxis of neutrophils. The polypeptide is Vespid chemotactic peptide 5h (Vespa magnifica (Hornet)).